Here is a 281-residue protein sequence, read N- to C-terminus: UPF0294 protein VP2298 (281 aa).

Belongs to the UPF0294 family.

It is found in the cytoplasm. The chain is UPF0294 protein VP2298 from Vibrio parahaemolyticus serotype O3:K6 (strain RIMD 2210633).